The sequence spans 628 residues: Probable alpha-L-arabinofuranosidase A (628 aa).

An N-terminal signal peptide occupies residues 1 to 25 (MVAFSTISGLGALSLLFSIIESVDG). Asn36, Asn51, Asn74, Asn152, Asn164, Asn260, Asn359, Asn404, and Asn493 each carry an N-linked (GlcNAc...) asparagine glycan.

This sequence belongs to the glycosyl hydrolase 51 family.

It localises to the secreted. It catalyses the reaction Hydrolysis of terminal non-reducing alpha-L-arabinofuranoside residues in alpha-L-arabinosides.. Its pathway is glycan metabolism; L-arabinan degradation. Functionally, alpha-L-arabinofuranosidase involved in the degradation of arabinoxylan, a major component of plant hemicellulose. Acts only on small linear 1,5-alpha-linked L-arabinofuranosyl oligosaccharides. This is Probable alpha-L-arabinofuranosidase A (abfA) from Aspergillus terreus (strain NIH 2624 / FGSC A1156).